The chain runs to 195 residues: Protein A43 (195 aa).

The signal sequence occupies residues 1-21 (MMIKWIISILTMSIMPVLVYS). The Extracellular segment spans residues 23-166 (SIFRFRSEDV…YKDINDKYND (144 aa)). Asn-66 and Asn-115 each carry an N-linked (GlcNAc...) asparagine; by host glycan. Residues 167–187 (IYDFTAICMLIASTLIVTIYV) traverse the membrane as a helical segment. At 188–195 (FKKIKMNS) the chain is on the cytoplasmic side.

It belongs to the orthopoxvirus OPG172 protein family.

The protein localises to the host membrane. It is found in the host cell surface. The polypeptide is Protein A43 (OPG172) (Homo sapiens (Human)).